A 341-amino-acid polypeptide reads, in one-letter code: Tetraacyldisaccharide 4'-kinase (341 aa).

Position 54–61 (54–61 (TVGGAGKT)) interacts with ATP.

It belongs to the LpxK family.

The catalysed reaction is a lipid A disaccharide + ATP = a lipid IVA + ADP + H(+). It functions in the pathway glycolipid biosynthesis; lipid IV(A) biosynthesis; lipid IV(A) from (3R)-3-hydroxytetradecanoyl-[acyl-carrier-protein] and UDP-N-acetyl-alpha-D-glucosamine: step 6/6. Its function is as follows. Transfers the gamma-phosphate of ATP to the 4'-position of a tetraacyldisaccharide 1-phosphate intermediate (termed DS-1-P) to form tetraacyldisaccharide 1,4'-bis-phosphate (lipid IVA). The chain is Tetraacyldisaccharide 4'-kinase from Brucella melitensis biotype 2 (strain ATCC 23457).